Reading from the N-terminus, the 130-residue chain is Small ribosomal subunit protein uS9 (130 aa).

Belongs to the universal ribosomal protein uS9 family.

The sequence is that of Small ribosomal subunit protein uS9 from Cupriavidus necator (strain ATCC 17699 / DSM 428 / KCTC 22496 / NCIMB 10442 / H16 / Stanier 337) (Ralstonia eutropha).